A 144-amino-acid polypeptide reads, in one-letter code: INO80 complex subunit 5 (144 aa).

Positions 1-58 (MAAQKKQGERVLPARSTRKRRQLPDMLYYDERTDSYVTPQERSLSEANAQTRPAPNTI) are disordered. Residues 35–58 (SYVTPQERSLSEANAQTRPAPNTI) show a composition bias toward polar residues.

Component of the INO80 chromatin remodeling complex.

The protein localises to the nucleus. Its function is as follows. Component of the INO80 complex which remodels chromatin by shifting nucleosomes and is involved in DNA repair. The protein is INO80 complex subunit 5 (iec5) of Schizosaccharomyces pombe (strain 972 / ATCC 24843) (Fission yeast).